The following is a 714-amino-acid chain: EtfAB:quinone oxidoreductase (714 aa).

A run of 6 helical transmembrane segments spans residues 25-45, 87-107, 125-145, 164-184, 207-227, and 236-256; these read YEWL…FGFW, AGWM…AAGI, IGFS…VMVL, DGWI…IEGL, PFGW…MLMW, and MAIA…HIFA. 4Fe-4S ferredoxin-type domains lie at 293 to 324 and 375 to 405; these read WKDL…LNPK and YDVV…HIPK. [4Fe-4S] cluster contacts are provided by Cys302, Cys305, Cys308, Cys312, Cys386, Cys389, Cys392, and Cys396.

In terms of assembly, might constitute a membrane-associated complex with EtfA (Swol_0697), EtfB (Swol_0696), and the butyryl-CoA dehydrogenase Swol_1933 and/or Swol_2052. It depends on [4Fe-4S] cluster as a cofactor.

The protein localises to the cell membrane. It participates in lipid metabolism; butanoate metabolism. In terms of biological role, oxidoreductase involved in syntrophic growth of S.wolfei with butyrate. Is presumed to link the electron flow from butyryl-CoA dehydrogenases to the membrane, in conjunction with the electron transfer flavoprotein EtfAB. May transfer electrons to the menaquinone pool of the membrane. The sequence is that of EtfAB:quinone oxidoreductase from Syntrophomonas wolfei subsp. wolfei (strain DSM 2245B / Goettingen).